The chain runs to 215 residues: Probable phosphoglycerate mutase GpmB (215 aa).

Residues 8-15 (RHGETVWN), 21-22 (QG), R58, 82-85 (ELNM), and 151-152 (GM) contribute to the substrate site. The active-site Tele-phosphohistidine intermediate is the H9. E82 (proton donor/acceptor) is an active-site residue.

The protein belongs to the phosphoglycerate mutase family. GpmB subfamily.

The enzyme catalyses (2R)-2-phosphoglycerate = (2R)-3-phosphoglycerate. It functions in the pathway carbohydrate degradation; glycolysis; pyruvate from D-glyceraldehyde 3-phosphate: step 3/5. The protein is Probable phosphoglycerate mutase GpmB of Yersinia enterocolitica serotype O:8 / biotype 1B (strain NCTC 13174 / 8081).